The following is a 117-amino-acid chain: Immunoglobulin heavy variable 1-69D (117 aa).

The first 19 residues, 1-19 (MDWTWRFLFVVAAATGVQS), serve as a signal peptide directing secretion. The residue at position 20 (Q20) is a Pyrrolidone carboxylic acid. Residues 20–44 (QVQLVQSGAEVKKPGSSVKVSCKAS) are framework-1. The region spanning 20–117 (QVQLVQSGAE…EDTAVYYCAR (98 aa)) is the Ig-like domain. C41 and C115 form a disulfide bridge. The tract at residues 45–52 (GGTFSSYA) is complementarity-determining-1. A framework-2 region spans residues 53–69 (ISWVRQAPGQGLEWMGG). The interval 70–77 (IIPIFGTA) is complementarity-determining-2. The interval 78-115 (NYAQKFQGRVTITADESTSTAYMELSSLRSEDTAVYYC) is framework-3. The complementarity-determining-3 stretch occupies residues 116–117 (AR).

Immunoglobulins are composed of two identical heavy chains and two identical light chains; disulfide-linked.

It localises to the secreted. It is found in the cell membrane. Functionally, v region of the variable domain of immunoglobulin heavy chains that participates in the antigen recognition. Immunoglobulins, also known as antibodies, are membrane-bound or secreted glycoproteins produced by B lymphocytes. In the recognition phase of humoral immunity, the membrane-bound immunoglobulins serve as receptors which, upon binding of a specific antigen, trigger the clonal expansion and differentiation of B lymphocytes into immunoglobulins-secreting plasma cells. Secreted immunoglobulins mediate the effector phase of humoral immunity, which results in the elimination of bound antigens. The antigen binding site is formed by the variable domain of one heavy chain, together with that of its associated light chain. Thus, each immunoglobulin has two antigen binding sites with remarkable affinity for a particular antigen. The variable domains are assembled by a process called V-(D)-J rearrangement and can then be subjected to somatic hypermutations which, after exposure to antigen and selection, allow affinity maturation for a particular antigen. The sequence is that of Immunoglobulin heavy variable 1-69D from Homo sapiens (Human).